The following is a 472-amino-acid chain: Peptidoglycan endopeptidase RipA (472 aa).

Residues 1–39 (MRRNRRGSPARPAARFVRPAIPSALSVALLVCTPGLATA) constitute a signal peptide (tat-type signal). One can recognise a NlpC/P60 domain in the interval 340-472 (RQASEYVIRR…TPYVVRYIEY (133 aa)). The active-site Nucleophile is the cysteine 383. Residue histidine 432 is the Proton acceptor of the active site. Glutamate 444 is an active-site residue.

This sequence belongs to the peptidase C40 family. In terms of assembly, monomer. Interacts with RpfB and PBP1A (ponA1) via residues 448-472 of RipA, interacts with RpfE. Interacts with the chaperone MoxR1. RipA-MoxR1 interaction in the cytoplasm leads to proper folding of RipA, resulting in its secretion. Also interacts with Mce2B. Exported by the Tat system. The position of the signal peptide cleavage has not been experimentally proven.

The protein resides in the secreted. MoxR1-mediated folding is critical for secretion via the TAT system. The synergistic effects on peptidoglycan degradation of RipA plus RpfB are inhibited by addition of PBP1A (ponA1). In terms of biological role, peptidoglycan endopeptidase that cleaves the bond between D-glutamate and meso-diaminopimelate. Binds and degrades high-molecular weight peptidoglycan from a number of Actinobacteria; activity is increased in the presence of RpfB and inhibited by PBP1A (ponA1). Required for normal separation of daughter cells after cell division and for cell wall integrity. Required for host cell invasion and intracellular survival in host macrophages. The sequence is that of Peptidoglycan endopeptidase RipA (ripA) from Mycobacterium tuberculosis (strain ATCC 25618 / H37Rv).